The primary structure comprises 557 residues: Neurofilament light polypeptide (557 aa).

S2 is modified (N-acetylserine). A head region spans residues 2 to 89 (SSYSYDPYYT…KIVRTQEKAQ (88 aa)). In terms of domain architecture, IF rod spans 86–396 (EKAQLQDLND…KLLEGEETRL (311 aa)). Residues 90 to 121 (LQDLNDRFANFIERVHELEQRNKVLEAELLLL) are coil 1A. Residues 122-134 (RQKHNEPSRLRDL) form a linker 1 region. Residues 135-230 (YEQEVRELRL…KVHEEELAQL (96 aa)) are coil 1B. Positions 231–248 (QSQVQYAQISLEVEVAKP) are linker 12. Residues 249 to 267 (DLSSALRDIRAQYEKLAAK) form a coil 2A region. Residues 268 to 276 (NMQSAEDWF) are linker 2. The tract at residues 277 to 392 (KSRFTVLTQS…AAYRKLLEGE (116 aa)) is coil 2B. Positions 393–437 (ETRLSFSGVGAITSGYTQSAPVFGRSAYSLQSSSYMTSRAFPTYY) are tail, subdomain A. The tail stretch occupies residues 393–557 (ETRLSFSGVG…KKKKKKKKKK (165 aa)). Residues 438–557 (SSHVQEEQLD…KKKKKKKKKK (120 aa)) form a tail, subdomain B (acidic) region. The tract at residues 452–557 (IESSRAEEAK…KKKKKKKKKK (106 aa)) is disordered. The span at 453 to 464 (ESSRAEEAKAEA) shows a compositional bias: basic and acidic residues. The segment covering 465–538 (PEEEEEEAGE…GEGEEEEEGK (74 aa)) has biased composition (acidic residues). Residues 539 to 548 (GEEPAEEESK) show a composition bias toward basic and acidic residues.

This sequence belongs to the intermediate filament family. Forms homodimers (in vitro).

The protein resides in the cell projection. The protein localises to the axon. Its subcellular location is the cytoplasm. It localises to the cytoskeleton. Neurofilaments usually contain three intermediate filament proteins: NEFL, NEFM, and NEFH which are involved in the maintenance of neuronal caliber. May additionally cooperate with other neuronal intermediate filament proteins to form neuronal filamentous networks. This chain is Neurofilament light polypeptide (nefl), found in Xenopus tropicalis (Western clawed frog).